The sequence spans 555 residues: MKIDLNTIFPSSCKEYIPGKIYKNIKIGMRKVSFNNDTESILIYDTGGPHSDQDIQTNINNGIKKLRVNWITDRQDVEYYDRHTINTNSSTAFPLQNNKALKSKNDKPVTQMFYAKNNIITPEMEYVAIRENSLIQKLLSHTPNTIIPEITPELVRQEVAAGRAIIPANINHPESEPMIIGKNFLVKINANIGNSAVSSDINNEVYKMIYAIIYGADTVMDLSTGSHIHNTREWIIRNSPVPIGTVPIYQALNKVNGIVGELNFNIFKETLIEQAEQGVDYFTIHAGVLKKYIQYTTNRLTGIVSRGGAIIAQWCSIHNKENFLYTNFEEICDIMKSYDIAFSLGDGLRPGSIADANDKAQFLELKTLGELTDIAWKHDCQVMIEGPGHVPMHLIKENVEKQMYFCKEAPFYTLGPLTTDIAPGYDHITSAIGAAMIGWYGTSMLCYVTPKEHLGLPNLNDVKNGVITYKIAAHAADLAKGNPSAYIRDYALSYARFNFRWYDQFNLSLDPETAKSFHDESLPSEHAKSAHFCSMCGPKFCSMKLTHQLQLNSTE.

Substrate-binding positions include asparagine 191, methionine 220, tyrosine 249, histidine 285, 305–307 (SRG), 346–349 (DGLR), and glutamate 385. Histidine 389 provides a ligand contact to Zn(2+). Tyrosine 412 lines the substrate pocket. Zn(2+) is bound at residue histidine 453. [4Fe-4S] cluster-binding residues include cysteine 533, cysteine 536, and cysteine 541.

This sequence belongs to the ThiC family. In terms of assembly, homodimer. [4Fe-4S] cluster is required as a cofactor.

It carries out the reaction 5-amino-1-(5-phospho-beta-D-ribosyl)imidazole + S-adenosyl-L-methionine = 4-amino-2-methyl-5-(phosphooxymethyl)pyrimidine + CO + 5'-deoxyadenosine + formate + L-methionine + 3 H(+). It participates in cofactor biosynthesis; thiamine diphosphate biosynthesis. In terms of biological role, catalyzes the synthesis of the hydroxymethylpyrimidine phosphate (HMP-P) moiety of thiamine from aminoimidazole ribotide (AIR) in a radical S-adenosyl-L-methionine (SAM)-dependent reaction. This Ehrlichia ruminantium (strain Gardel) protein is Phosphomethylpyrimidine synthase.